A 162-amino-acid polypeptide reads, in one-letter code: 2-C-methyl-D-erythritol 2,4-cyclodiphosphate synthase (162 aa).

The a divalent metal cation site is built by aspartate 10 and histidine 12. 4-CDP-2-C-methyl-D-erythritol 2-phosphate is bound by residues 10–12 and 36–37; these read DVH and HS. Histidine 44 is a binding site for a divalent metal cation. 4-CDP-2-C-methyl-D-erythritol 2-phosphate contacts are provided by residues 58–60, 63–67, and arginine 144; these read DIG and FSDTD.

It belongs to the IspF family. In terms of assembly, homotrimer. It depends on a divalent metal cation as a cofactor.

The enzyme catalyses 4-CDP-2-C-methyl-D-erythritol 2-phosphate = 2-C-methyl-D-erythritol 2,4-cyclic diphosphate + CMP. It functions in the pathway isoprenoid biosynthesis; isopentenyl diphosphate biosynthesis via DXP pathway; isopentenyl diphosphate from 1-deoxy-D-xylulose 5-phosphate: step 4/6. Functionally, involved in the biosynthesis of isopentenyl diphosphate (IPP) and dimethylallyl diphosphate (DMAPP), two major building blocks of isoprenoid compounds. Catalyzes the conversion of 4-diphosphocytidyl-2-C-methyl-D-erythritol 2-phosphate (CDP-ME2P) to 2-C-methyl-D-erythritol 2,4-cyclodiphosphate (ME-CPP) with a corresponding release of cytidine 5-monophosphate (CMP). The polypeptide is 2-C-methyl-D-erythritol 2,4-cyclodiphosphate synthase (Burkholderia mallei (strain NCTC 10247)).